The sequence spans 487 residues: Glutamyl-tRNA(Gln) amidotransferase subunit A (487 aa).

Residues Lys77 and Ser152 each act as charge relay system in the active site. Ser176 serves as the catalytic Acyl-ester intermediate.

It belongs to the amidase family. GatA subfamily. As to quaternary structure, heterotrimer of A, B and C subunits.

It catalyses the reaction L-glutamyl-tRNA(Gln) + L-glutamine + ATP + H2O = L-glutaminyl-tRNA(Gln) + L-glutamate + ADP + phosphate + H(+). In terms of biological role, allows the formation of correctly charged Gln-tRNA(Gln) through the transamidation of misacylated Glu-tRNA(Gln) in organisms which lack glutaminyl-tRNA synthetase. The reaction takes place in the presence of glutamine and ATP through an activated gamma-phospho-Glu-tRNA(Gln). This chain is Glutamyl-tRNA(Gln) amidotransferase subunit A, found in Lactiplantibacillus plantarum (strain ATCC BAA-793 / NCIMB 8826 / WCFS1) (Lactobacillus plantarum).